The chain runs to 524 residues: ORC1-type DNA replication protein 4 (524 aa).

The span at 1–23 shows a compositional bias: polar residues; the sequence is MTDKSNNPAPASDPSTTETSNDA. Residues 1-67 are disordered; the sequence is MTDKSNNPAP…DDPSDEASRG (67 aa). Residues 128-132, tyrosine 325, and arginine 337 each bind ATP; that span reads TGKTA.

The protein belongs to the CDC6/cdc18 family.

Functionally, involved in regulation of DNA replication. This chain is ORC1-type DNA replication protein 4 (cdc6d), found in Haloarcula marismortui (strain ATCC 43049 / DSM 3752 / JCM 8966 / VKM B-1809) (Halobacterium marismortui).